Here is a 102-residue protein sequence, read N- to C-terminus: Large ribosomal subunit protein uL24 (102 aa).

This sequence belongs to the universal ribosomal protein uL24 family. As to quaternary structure, part of the 50S ribosomal subunit.

Its function is as follows. One of two assembly initiator proteins, it binds directly to the 5'-end of the 23S rRNA, where it nucleates assembly of the 50S subunit. In terms of biological role, one of the proteins that surrounds the polypeptide exit tunnel on the outside of the subunit. The polypeptide is Large ribosomal subunit protein uL24 (Ralstonia pickettii (strain 12J)).